A 721-amino-acid polypeptide reads, in one-letter code: Choline O-acetyltransferase (721 aa).

H419 serves as the catalytic Proton acceptor. CoA is bound by residues 496–508, S534, and Q656; that span reads GKTF…VSPD.

Belongs to the carnitine/choline acetyltransferase family. The 54 kDa and 13 kDa chains exist as a heterodimer. In terms of processing, the N-terminus of choline O-acetyltransferase 67 kDa and 54 kDa chains are blocked.

It carries out the reaction choline + acetyl-CoA = acetylcholine + CoA. Functionally, catalyzes the reversible synthesis of acetylcholine (ACh) from acetyl CoA and choline at cholinergic synapses. This is Choline O-acetyltransferase from Drosophila melanogaster (Fruit fly).